The following is a 151-amino-acid chain: Ribosome maturation factor RimP (151 aa).

This sequence belongs to the RimP family.

The protein localises to the cytoplasm. Its function is as follows. Required for maturation of 30S ribosomal subunits. In Pseudoalteromonas translucida (strain TAC 125), this protein is Ribosome maturation factor RimP.